The chain runs to 841 residues: Protein translocase subunit SecA (841 aa).

ATP-binding positions include Gln85, 103 to 107, and Asp492; that span reads GEGKT. The disordered stretch occupies residues 788-841; the sequence is EVVQGQTTAHQPQEGDEEKTVKKKPVRKVVDIGRNSPCHCGSGKKYKNCHGKTE. Residues Cys825, Cys827, Cys836, and His837 each contribute to the Zn(2+) site. Positions 829–841 are enriched in basic residues; sequence SGKKYKNCHGKTE.

Belongs to the SecA family. Monomer and homodimer. Part of the essential Sec protein translocation apparatus which comprises SecA, SecYEG and auxiliary proteins SecDF. Other proteins may also be involved. Zn(2+) is required as a cofactor.

It is found in the cell membrane. It localises to the cytoplasm. The catalysed reaction is ATP + H2O + cellular proteinSide 1 = ADP + phosphate + cellular proteinSide 2.. Its function is as follows. Part of the Sec protein translocase complex. Interacts with the SecYEG preprotein conducting channel. Has a central role in coupling the hydrolysis of ATP to the transfer of proteins into and across the cell membrane, serving as an ATP-driven molecular motor driving the stepwise translocation of polypeptide chains across the membrane. The sequence is that of Protein translocase subunit SecA from Bacillus pumilus (strain SAFR-032).